Consider the following 306-residue polypeptide: LysM and putative peptidoglycan-binding domain-containing protein 3 (306 aa).

Topologically, residues 1-217 (MAGRHQNRSF…PYYGADWGIG (217 aa)) are extracellular. Residue asparagine 7 is glycosylated (N-linked (GlcNAc...) asparagine). Serine 55 carries the post-translational modification Phosphoserine. Residues 65–109 (LTKDIQEGDTLNAIALQYCCTVADIKRVNNLISDQDFFALRSIKI) form the LysM domain. Residues 218–238 (WWTAVVIMLIVGIITPVFYLL) traverse the membrane as a helical segment. Over 239 to 306 (YYEILAKVDV…SQSPAAQQET (68 aa)) the chain is Cytoplasmic.

It is found in the cell membrane. The protein resides in the golgi apparatus. Functionally, essential for Golgi structural integrity. This Homo sapiens (Human) protein is LysM and putative peptidoglycan-binding domain-containing protein 3 (LYSMD3).